We begin with the raw amino-acid sequence, 237 residues long: Probable aquaporin SIP2-1 (237 aa).

A run of 6 helical transmembrane segments spans residues 15-35 (FMWI…LGFS), 39-59 (PSGE…FAYL), 71-91 (LTAL…SVFV), 122-142 (VAIH…VLLS), 169-189 (ILGS…GWAY), and 202-222 (VYWL…KVVF). An NPA 1 motif is present at residues 69–71 (NPL). The short motif at 180–182 (NPA) is the NPA 2 element.

This sequence belongs to the MIP/aquaporin (TC 1.A.8) family. SIP (TC 1.A.8.10) subfamily. Expressed in dividing cells and elongating regions of the root tips, emerging lateral roots, root steles, cotyledons, main veins of the rosette leaves, vascular tissues of the flower petals, stigma, stamens (anthers and filaments), pollen and the top and bottom (receptacle) of siliques.

It localises to the endoplasmic reticulum membrane. Water channel required to facilitate the transport of water across cell membrane. Inactive in yeast cells. This is Probable aquaporin SIP2-1 (SIP2-1) from Arabidopsis thaliana (Mouse-ear cress).